Consider the following 437-residue polypeptide: Trigger factor (437 aa).

The 86-residue stretch at 161 to 246 (DDQVNIDFVG…VNSVSAPVLP (86 aa)) folds into the PPIase FKBP-type domain.

Belongs to the FKBP-type PPIase family. Tig subfamily.

It localises to the cytoplasm. The catalysed reaction is [protein]-peptidylproline (omega=180) = [protein]-peptidylproline (omega=0). In terms of biological role, involved in protein export. Acts as a chaperone by maintaining the newly synthesized protein in an open conformation. Functions as a peptidyl-prolyl cis-trans isomerase. This chain is Trigger factor, found in Pseudomonas putida (strain ATCC 47054 / DSM 6125 / CFBP 8728 / NCIMB 11950 / KT2440).